Consider the following 241-residue polypeptide: Aquaporin Z 1 (241 aa).

A helical membrane pass occupies residues 23–43 (AVFAAAFPELGIGFLGVAFAF). The NPA 1 signature appears at 63–65 (NPA). A run of 3 helical transmembrane segments spans residues 85–105 (IVAQ…ILTG), 129–149 (LLSA…VILG), and 156–176 (PVGF…LISI). Positions 184-186 (NPA) match the NPA 2 motif. The chain crosses the membrane as a helical span at residues 204–224 (WLFWLAPILGGAIGAVVWKIF).

The protein belongs to the MIP/aquaporin (TC 1.A.8) family. In terms of assembly, homotetramer.

The protein localises to the cell inner membrane. The catalysed reaction is H2O(in) = H2O(out). Its function is as follows. Channel that permits osmotically driven movement of water in both directions. It is involved in the osmoregulation and in the maintenance of cell turgor during volume expansion in rapidly growing cells. It mediates rapid entry or exit of water in response to abrupt changes in osmolarity. The sequence is that of Aquaporin Z 1 from Agrobacterium fabrum (strain C58 / ATCC 33970) (Agrobacterium tumefaciens (strain C58)).